The sequence spans 202 residues: Imidazole glycerol phosphate synthase subunit HisH 2 (202 aa).

The Glutamine amidotransferase type-1 domain maps to 1–202 (MIVVIDYGVG…QLFKNFVELV (202 aa)). Catalysis depends on Cys-80, which acts as the Nucleophile. Residues His-183 and Glu-185 contribute to the active site.

In terms of assembly, heterodimer of HisH and HisF.

It is found in the cytoplasm. The catalysed reaction is 5-[(5-phospho-1-deoxy-D-ribulos-1-ylimino)methylamino]-1-(5-phospho-beta-D-ribosyl)imidazole-4-carboxamide + L-glutamine = D-erythro-1-(imidazol-4-yl)glycerol 3-phosphate + 5-amino-1-(5-phospho-beta-D-ribosyl)imidazole-4-carboxamide + L-glutamate + H(+). It catalyses the reaction L-glutamine + H2O = L-glutamate + NH4(+). The protein operates within amino-acid biosynthesis; L-histidine biosynthesis; L-histidine from 5-phospho-alpha-D-ribose 1-diphosphate: step 5/9. Functionally, IGPS catalyzes the conversion of PRFAR and glutamine to IGP, AICAR and glutamate. The HisH subunit catalyzes the hydrolysis of glutamine to glutamate and ammonia as part of the synthesis of IGP and AICAR. The resulting ammonia molecule is channeled to the active site of HisF. The polypeptide is Imidazole glycerol phosphate synthase subunit HisH 2 (hisH2) (Pseudomonas aeruginosa (strain ATCC 15692 / DSM 22644 / CIP 104116 / JCM 14847 / LMG 12228 / 1C / PRS 101 / PAO1)).